We begin with the raw amino-acid sequence, 600 residues long: MTTIFGSSNAMFLNIEANKENIPPGTEFKKESFVLPEPRVNRTTDPDHENLLPSPVPRPSPAMSQLSDASFLSQDGGAVNTSADEADDDLEVTSRKEKSLGLLCQRFLIAINEETVGSSTREVHLETVARKMNVEKRRIYDIVNVMEALDAMQKTNKSYYQWQGLESLPKLMFDLQNEAVEEGLPERVLRVEQAMCSFTELSSPRGKQGFKDIVGSFVSCTSTPTTPSTSFDSVTVKMEPAGLLEKRSRVDTRDRQGRNSLAQLCRRFLMVLLSNPKNIRKVSLDVASTVLIKDPETEGFEPPSRSRCRRLYDIANVLVALGLIKKVHYLFGTKKIPLFVYCGPEPDQTGSFDVFQSVERLLSSSQNVPQTPIIKAQTDKIVQQIAGFGKRTLSEQNLTKPSGNTPKIAKIKSAAVRSSPMYMENNLFMFAEVVTAEAAAEKMRYDAFAQLSRTILGSVASINSLNAPLTSSQHPMTSRLPPLPMAPLQLPKLPEIPKPQAQKQFTFPATSRPRFNFPDYTPVQSTIRPLVSQMTFPQESSQLHNLDVKPKHLMSNILGESKKFKNNQNTFEHTTSSAFQVVKKGETRPKKVFGEIQNLQ.

Residues 35 to 65 (LPEPRVNRTTDPDHENLLPSPVPRPSPAMSQ) are disordered. Residues 39-50 (RVNRTTDPDHEN) are compositionally biased toward basic and acidic residues. 2 consecutive DNA-binding regions follow at residues 95–164 (RKEK…QWQG) and 253–343 (RDRQ…VYCG).

This sequence belongs to the E2F/DP family.

The protein localises to the nucleus. Its function is as follows. Probable transcription factor which represses gene expression in a subset of ventral nerve cord neurons. Involved in regulating programmed cell death and determining cell fate during development, acting in a partially redundant manner with lin-39 to repress the BH3 domain-encoding gene egl-1 in the VA and VB motor neurons. This chain is Transcription factor efl-3, found in Caenorhabditis elegans.